The sequence spans 833 residues: RNA-binding protein 5-A (833 aa).

The disordered stretch occupies residues 1–87 (MGSDKRVSRS…GYHSDGDYMD (87 aa)). Residues 102 to 182 (KTIMLRGLPI…KTIAMHYSNP (81 aa)) form the RRM 1 domain. The RanBP2-type zinc-finger motif lies at 185–214 (KFEDWLCNKCGLYNFRRRLKCFRCGAAKAE). One can recognise an RRM 2 domain in the interval 241 to 325 (SAIILRNIGP…KTIGVDFAKS (85 aa)). Positions 396–428 (TGAAEQGTAPQAESSSPVPATTSAVVCQSPQMY) are enriched in polar residues. Disordered stretches follow at residues 396 to 458 (TGAA…EEAA) and 523 to 559 (AADG…TAQQ). Positions 429 to 458 (QQPGSPTQSSTSTVAASATPASGTSAEEAA) are enriched in low complexity. A C2H2-type zinc finger spans residues 667 to 692 (LACLLCRRQFPNKDALTRHQQLSDLH). The G-patch domain maps to 761 to 807 (NSNIGNKMLQAMGWKEGSGLGRKSQGITAPIQAQVRMRGAGLGAKGS).

The protein belongs to the RBM5/RBM10 family. Component of the spliceosome A complex (also known as the prespliceosome). Appears to dissociate from the spliceosome upon formation of the spliceosome B complex (also known as the precatalytic spliceosome), in which the heterotrimeric U4/U6.U5 snRNPs are bound.

Its subcellular location is the nucleus. Functionally, component of the spliceosome A complex. Regulates alternative splicing of a number of mRNAs. May modulate splice site pairing after recruitment of the U1 and U2 snRNPs to the 5' and 3' splice sites of the intron. The sequence is that of RNA-binding protein 5-A (rbm5-a) from Xenopus laevis (African clawed frog).